Here is a 154-residue protein sequence, read N- to C-terminus: 6,7-dimethyl-8-ribityllumazine synthase (154 aa).

5-amino-6-(D-ribitylamino)uracil-binding positions include F22, 56-58 (AFE), and 80-82 (AVI). 85 to 86 (AT) is a binding site for (2S)-2-hydroxy-3-oxobutyl phosphate. The Proton donor role is filled by H88. A 5-amino-6-(D-ribitylamino)uracil-binding site is contributed by F113. R127 contacts (2S)-2-hydroxy-3-oxobutyl phosphate.

This sequence belongs to the DMRL synthase family.

It carries out the reaction (2S)-2-hydroxy-3-oxobutyl phosphate + 5-amino-6-(D-ribitylamino)uracil = 6,7-dimethyl-8-(1-D-ribityl)lumazine + phosphate + 2 H2O + H(+). The protein operates within cofactor biosynthesis; riboflavin biosynthesis; riboflavin from 2-hydroxy-3-oxobutyl phosphate and 5-amino-6-(D-ribitylamino)uracil: step 1/2. Functionally, catalyzes the formation of 6,7-dimethyl-8-ribityllumazine by condensation of 5-amino-6-(D-ribitylamino)uracil with 3,4-dihydroxy-2-butanone 4-phosphate. This is the penultimate step in the biosynthesis of riboflavin. This chain is 6,7-dimethyl-8-ribityllumazine synthase, found in Syntrophobacter fumaroxidans (strain DSM 10017 / MPOB).